We begin with the raw amino-acid sequence, 402 residues long: CinA-like protein (402 aa).

Belongs to the CinA family.

The sequence is that of CinA-like protein from Escherichia coli O17:K52:H18 (strain UMN026 / ExPEC).